A 301-amino-acid polypeptide reads, in one-letter code: MGPTASGKTDLAIALARKLPFEIISVDSAMVYRGLDIGTAKPNEEELQLTSHRLINICDPSFPYSAGQFYKDALSEIKTIEIRNRTPLLVGGTMLYFHILEQGFSDLPTADETVRKKIQEEAAQHGWAKIHERLNAIDPKSAARINPNDAQRIQRAFEVYETTGQPLSSYQSLKRFKALPYQFINLILAPENRSWLHQRIEKRFDQMLKNNFLEEVRQLYNRGDLNSDLPAIRTVGYRQVWKYLSGEYDYETMRHKAIAATRQLAKRQLTWLRRWPDAKWFNSEDKDLISQVVDYLKGIGM.

ATP is bound at residue Gly2–Thr9. Thr4–Thr9 is a binding site for substrate. Interaction with substrate tRNA stretches follow at residues Asp27–Met30 and Gln151–Arg155.

It belongs to the IPP transferase family. As to quaternary structure, monomer. The cofactor is Mg(2+).

It catalyses the reaction adenosine(37) in tRNA + dimethylallyl diphosphate = N(6)-dimethylallyladenosine(37) in tRNA + diphosphate. Its function is as follows. Catalyzes the transfer of a dimethylallyl group onto the adenine at position 37 in tRNAs that read codons beginning with uridine, leading to the formation of N6-(dimethylallyl)adenosine (i(6)A). The sequence is that of tRNA dimethylallyltransferase from Coxiella burnetii (strain CbuK_Q154) (Coxiella burnetii (strain Q154)).